Consider the following 263-residue polypeptide: Glucosamine-6-phosphate deaminase (263 aa).

Catalysis depends on Asp-72, which acts as the Proton acceptor; for enolization step. Asp-141 acts as the For ring-opening step in catalysis. His-143 (proton acceptor; for ring-opening step) is an active-site residue. Residue Glu-148 is the For ring-opening step of the active site.

This sequence belongs to the glucosamine/galactosamine-6-phosphate isomerase family. NagB subfamily.

It catalyses the reaction alpha-D-glucosamine 6-phosphate + H2O = beta-D-fructose 6-phosphate + NH4(+). It functions in the pathway amino-sugar metabolism; N-acetylneuraminate degradation; D-fructose 6-phosphate from N-acetylneuraminate: step 5/5. Allosterically activated by N-acetylglucosamine 6-phosphate (GlcNAc6P). In terms of biological role, catalyzes the reversible isomerization-deamination of glucosamine 6-phosphate (GlcN6P) to form fructose 6-phosphate (Fru6P) and ammonium ion. This Phocaeicola vulgatus (strain ATCC 8482 / DSM 1447 / JCM 5826 / CCUG 4940 / NBRC 14291 / NCTC 11154) (Bacteroides vulgatus) protein is Glucosamine-6-phosphate deaminase.